Consider the following 335-residue polypeptide: Glycerol-3-phosphate dehydrogenase [NAD(P)+] (335 aa).

Positions 12, 13, and 107 each coordinate NADPH. Residues Lys107, Gly138, and Ser140 each contribute to the sn-glycerol 3-phosphate site. Ala142 lines the NADPH pocket. Residues Lys193, Asp246, Ser256, Arg257, and Asn258 each coordinate sn-glycerol 3-phosphate. Catalysis depends on Lys193, which acts as the Proton acceptor. Residue Arg257 coordinates NADPH. 2 residues coordinate NADPH: Val281 and Glu283.

This sequence belongs to the NAD-dependent glycerol-3-phosphate dehydrogenase family.

The protein resides in the cytoplasm. It carries out the reaction sn-glycerol 3-phosphate + NAD(+) = dihydroxyacetone phosphate + NADH + H(+). It catalyses the reaction sn-glycerol 3-phosphate + NADP(+) = dihydroxyacetone phosphate + NADPH + H(+). It functions in the pathway membrane lipid metabolism; glycerophospholipid metabolism. Functionally, catalyzes the reduction of the glycolytic intermediate dihydroxyacetone phosphate (DHAP) to sn-glycerol 3-phosphate (G3P), the key precursor for phospholipid synthesis. This is Glycerol-3-phosphate dehydrogenase [NAD(P)+] from Geobacter sulfurreducens (strain ATCC 51573 / DSM 12127 / PCA).